The primary structure comprises 1041 residues: Integrator complex subunit 3 (1041 aa).

Met-1 bears the N-acetylmethionine mark. Phosphoserine is present on residues Ser-500, Ser-535, and Ser-993. The disordered stretch occupies residues 975 to 1041; it reads YEDSSTKPPK…GSSAVGSDSD (67 aa). Over residues 1006–1020 the composition is skewed to acidic residues; the sequence is AEEESGSSSASEEED.

This sequence belongs to the Integrator subunit 3 family. Component of the Integrator complex, composed of core subunits INTS1, INTS2, INTS3, INTS4, INTS5, INTS6, INTS7, INTS8, INTS9/RC74, INTS10, INTS11/CPSF3L, INTS12, INTS13, INTS14 and INTS15. The core complex associates with protein phosphatase 2A subunits PPP2CA and PPP2R1A, to form the Integrator-PP2A (INTAC) complex. Component of the SOSS complex, composed of SOSS-B (SOSS-B1/NABP2 or SOSS-B2/NABP1), SOSS-A/INTS3 and SOSS-C/INIP. SOSS complexes containing SOSS-B1/NABP2 are more abundant than complexes containing SOSS-B2/NABP1. Interacts with SOSS-B1/NABP2, SOSS-B2/NABP1 and SOSS-C/INIP; the interaction is direct. Interacts with NBN/NBS1.

The protein localises to the nucleus. It localises to the cytoplasm. Functionally, component of the integrator complex, a multiprotein complex that terminates RNA polymerase II (Pol II) transcription in the promoter-proximal region of genes. The integrator complex provides a quality checkpoint during transcription elongation by driving premature transcription termination of transcripts that are unfavorably configured for transcriptional elongation: the complex terminates transcription by (1) catalyzing dephosphorylation of the C-terminal domain (CTD) of Pol II subunit POLR2A/RPB1 and SUPT5H/SPT5, (2) degrading the exiting nascent RNA transcript via endonuclease activity and (3) promoting the release of Pol II from bound DNA. The integrator complex is also involved in terminating the synthesis of non-coding Pol II transcripts, such as enhancer RNAs (eRNAs), small nuclear RNAs (snRNAs), telomerase RNAs and long non-coding RNAs (lncRNAs). Within the integrator complex, INTS3 is involved in the post-termination step: INTS3 binds INTS7 in the open conformation of integrator complex and prevents the rebinding of Pol II to the integrator after termination cycle. Mediates recruitment of cytoplasmic dynein to the nuclear envelope, probably as component of the integrator complex. Its function is as follows. Component of the SOSS complex, a multiprotein complex that functions downstream of the MRN complex to promote DNA repair and G2/M checkpoint. The SOSS complex associates with single-stranded DNA at DNA lesions and influences diverse endpoints in the cellular DNA damage response including cell-cycle checkpoint activation, recombinational repair and maintenance of genomic stability. The SOSS complex is required for efficient homologous recombination-dependent repair of double-strand breaks (DSBs) and ATM-dependent signaling pathways. In the SOSS complex, it is required for the assembly of the complex and for stabilization of the complex at DNA damage sites. The sequence is that of Integrator complex subunit 3 (Ints3) from Mus musculus (Mouse).